The primary structure comprises 839 residues: Phenylalanine--tRNA ligase beta subunit (839 aa).

A tRNA-binding domain is found at 42 to 166 (GELTGPIVIG…PPSVEGHQLV (125 aa)). Positions 421–496 (PEMPRQTINA…RKIGFDRIKA (76 aa)) constitute a B5 domain. Mg(2+) contacts are provided by Asp-474, Asp-480, Glu-483, and Glu-484. The 94-residue stretch at 745–838 (SSFPVAKEDV…AEETCGAQLR (94 aa)) folds into the FDX-ACB domain.

Belongs to the phenylalanyl-tRNA synthetase beta subunit family. Type 1 subfamily. Tetramer of two alpha and two beta subunits. Requires Mg(2+) as cofactor.

It localises to the cytoplasm. The catalysed reaction is tRNA(Phe) + L-phenylalanine + ATP = L-phenylalanyl-tRNA(Phe) + AMP + diphosphate + H(+). The polypeptide is Phenylalanine--tRNA ligase beta subunit (Cutibacterium acnes (strain DSM 16379 / KPA171202) (Propionibacterium acnes)).